The primary structure comprises 1052 residues: Focal adhesion kinase 1 (1052 aa).

Residues 1-27 (MAAAYLDPNLNHTPNSSTKTHLGTGME) are disordered. Residue Ala-2 is modified to N-acetylalanine. Residue Tyr-5 is modified to Phosphotyrosine. Positions 10–21 (LNHTPNSSTKTH) are enriched in polar residues. A Phosphothreonine modification is found at Thr-13. Phosphoserine occurs at positions 29 and 54. The region spanning 35–355 (RVLKVFHYFE…GYCRLVNGTS (321 aa)) is the FERM domain. Residue Lys-152 forms a Glycyl lysine isopeptide (Lys-Gly) (interchain with G-Cter in SUMO) linkage. Tyr-397 is subject to Phosphotyrosine; by autocatalysis. Tyr-407 carries the post-translational modification Phosphotyrosine. A Protein kinase domain is found at 422 to 680 (IELGRCIGEG…ELKAQLSTIL (259 aa)). Residues 428–434 (IGEGQFG), Lys-454, and 500–502 (ELC) each bind ATP. Asp-546 functions as the Proton acceptor in the catalytic mechanism. Tyr-570 is modified (phosphotyrosine). Phosphotyrosine; by RET and SRC is present on residues Tyr-576 and Tyr-577. Ser-580 bears the Phosphoserine mark. A compositionally biased stretch (basic and acidic residues) spans 684-697 (KAQQEERMRMESRR). Disordered regions lie at residues 684 to 734 (KAQQ…PSPQ) and 839 to 922 (LSRG…RSND). Positions 707 to 1052 (GSDEAPPKPS…LKMLGQTRPH (346 aa)) are interaction with TGFB1I1. Ser-722 is subject to Phosphoserine. Ser-732 is modified (phosphoserine; by CDK5). Residues 839–849 (LSRGSIDREDG) are compositionally biased toward basic and acidic residues. A Phosphoserine modification is found at Ser-843. Position 861 is a phosphotyrosine (Tyr-861). Residues 869–880 (PAAPPKKPPRPG) are compositionally biased toward pro residues. Residues Ser-887 and Ser-910 each carry the phosphoserine modification. An interaction with ARHGEF28 region spans residues 912-1052 (PPTANLDRSN…LKMLGQTRPH (141 aa)). Thr-914 bears the Phosphothreonine mark. Position 925 is a phosphotyrosine (Tyr-925).

Belongs to the protein kinase superfamily. Tyr protein kinase family. FAK subfamily. In terms of assembly, interacts (via first Pro-rich region) with CAS family members (via SH3 domain), including BCAR1, BCAR3, and CASS4. Interacts with NEDD9 (via SH3 domain). Interacts with GIT1. Interacts with SORBS1. Interacts with ARHGEF28. Interacts with SHB. Part of a complex composed of THSD1, PTK2/FAK1, TLN1 and VCL. Interacts with PXN and TLN1. Interacts with STAT1. Interacts with DCC. Interacts with WASL. Interacts with ARHGEF7. Interacts with GRB2 and GRB7. Component of a complex that contains at least FER, CTTN and PTK2/FAK1. Interacts with BMX. Interacts with TGFB1I1. Interacts with STEAP4. Interacts with ZFYVE21. Interacts with ESR1. Interacts with PIK3R1 or PIK3R2. Interacts with SRC, FGR, FLT4 and RET. Interacts with EPHA2 in resting cells; activation of EPHA2 recruits PTPN11, leading to dephosphorylation of PTK2/FAK1 and dissociation of the complex. Interacts with EPHA1 (kinase activity-dependent). Interacts with CD4; this interaction requires the presence of HIV-1 gp120. Interacts with PIAS1. Interacts with ARHGAP26 and SHC1. Interacts with RB1CC1; this inhibits PTK2/FAK1 activity and activation of downstream signaling pathways. Interacts with P53/TP53 and MDM2. Interacts with LPXN (via LD motif 3). Interacts with MISP. Interacts with CIB1 isoform 2. Interacts with CD36. Interacts with EMP2; regulates PTK2 activation and localization. Interacts with DSCAM. Interacts with AMBRA1. Interacts (when tyrosine-phosphorylated) with tensin TNS1; the interaction is increased by phosphorylation of TNS1. Phosphorylated on tyrosine residues upon activation, e.g. upon integrin signaling. Tyr-397 is the major autophosphorylation site, but other kinases can also phosphorylate this residue. Phosphorylation at Tyr-397 promotes interaction with SRC and SRC family members, leading to phosphorylation at Tyr-576, Tyr-577 and at additional tyrosine residues. FGR promotes phosphorylation at Tyr-397 and Tyr-576. FER promotes phosphorylation at Tyr-577, Tyr-861 and Tyr-925, even when cells are not adherent. Tyr-397, Tyr-576 and Ser-722 are phosphorylated only when cells are adherent. Phosphorylation at Tyr-397 is important for interaction with BMX, PIK3R1 and SHC1. Phosphorylation at Tyr-925 is important for interaction with GRB2. Dephosphorylated by PTPN11; PTPN11 is recruited to PTK2 via EPHA2 (tyrosine phosphorylated). Microtubule-induced dephosphorylation at Tyr-397 is crucial for the induction of focal adhesion disassembly; this dephosphorylation could be catalyzed by PTPN11 and regulated by ZFYVE21. Phosphorylation on tyrosine residues is enhanced by NTN1. Post-translationally, sumoylated; this enhances autophosphorylation. Detected in B and T-lymphocytes. Isoform 1 and isoform 6 are detected in lung fibroblasts (at protein level). Ubiquitous. Expressed in epithelial cells (at protein level).

Its subcellular location is the cell junction. The protein localises to the focal adhesion. It is found in the cell membrane. It localises to the cytoplasm. The protein resides in the perinuclear region. Its subcellular location is the cell cortex. The protein localises to the cytoskeleton. It is found in the microtubule organizing center. It localises to the centrosome. The protein resides in the nucleus. Its subcellular location is the cilium basal body. It carries out the reaction L-tyrosyl-[protein] + ATP = O-phospho-L-tyrosyl-[protein] + ADP + H(+). With respect to regulation, subject to autoinhibition, mediated by interactions between the FERM domain and the kinase domain. Activated by autophosphorylation at Tyr-397. This promotes interaction with SRC and phosphorylation at Tyr-576 and Tyr-577 in the kinase activation loop. Phosphorylation at Tyr-576 and Tyr-577 is required for maximal kinase activity. Inhibited by TAC544, TAE226, PF-573,228 and PF-562,271. Its function is as follows. Non-receptor protein-tyrosine kinase that plays an essential role in regulating cell migration, adhesion, spreading, reorganization of the actin cytoskeleton, formation and disassembly of focal adhesions and cell protrusions, cell cycle progression, cell proliferation and apoptosis. Required for early embryonic development and placenta development. Required for embryonic angiogenesis, normal cardiomyocyte migration and proliferation, and normal heart development. Regulates axon growth and neuronal cell migration, axon branching and synapse formation; required for normal development of the nervous system. Plays a role in osteogenesis and differentiation of osteoblasts. Functions in integrin signal transduction, but also in signaling downstream of numerous growth factor receptors, G-protein coupled receptors (GPCR), EPHA2, netrin receptors and LDL receptors. Forms multisubunit signaling complexes with SRC and SRC family members upon activation; this leads to the phosphorylation of additional tyrosine residues, creating binding sites for scaffold proteins, effectors and substrates. Regulates numerous signaling pathways. Promotes activation of phosphatidylinositol 3-kinase and the AKT1 signaling cascade. Promotes activation of MAPK1/ERK2, MAPK3/ERK1 and the MAP kinase signaling cascade. Promotes localized and transient activation of guanine nucleotide exchange factors (GEFs) and GTPase-activating proteins (GAPs), and thereby modulates the activity of Rho family GTPases. Signaling via CAS family members mediates activation of RAC1. Phosphorylates NEDD9 following integrin stimulation. Recruits the ubiquitin ligase MDM2 to P53/TP53 in the nucleus, and thereby regulates P53/TP53 activity, P53/TP53 ubiquitination and proteasomal degradation. Phosphorylates SRC; this increases SRC kinase activity. Phosphorylates ACTN1, ARHGEF7, GRB7, RET and WASL. Promotes phosphorylation of PXN and STAT1; most likely PXN and STAT1 are phosphorylated by a SRC family kinase that is recruited to autophosphorylated PTK2/FAK1, rather than by PTK2/FAK1 itself. Promotes phosphorylation of BCAR1; GIT2 and SHC1; this requires both SRC and PTK2/FAK1. Promotes phosphorylation of BMX and PIK3R1. Isoform 6 (FRNK) does not contain a kinase domain and inhibits PTK2/FAK1 phosphorylation and signaling. Its enhanced expression can attenuate the nuclear accumulation of LPXN and limit its ability to enhance serum response factor (SRF)-dependent gene transcription. In terms of biological role, isoform 6 (FRNK) does not contain a kinase domain and inhibits PTK2/FAK1 phosphorylation and signaling. Its enhanced expression can attenuate the nuclear accumulation of LPXN and limit its ability to enhance serum response factor (SRF)-dependent gene transcription. The chain is Focal adhesion kinase 1 from Homo sapiens (Human).